A 133-amino-acid polypeptide reads, in one-letter code: NLP effector protein 14 (133 aa).

Positions Met1–Asp9 match the Conserved undecapeptide motifI I motif. The Hepta-peptide GHRHDWE motif II signature appears at Gly16 to Glu22.

Belongs to the Necrosis inducing protein (NPP1) family.

The protein localises to the secreted. In terms of biological role, secreted effector that contributes strongly to virulence during infection by P.capsici. Causes large necrotic areas in both host C.annuum and non-host N.benthamiana. This is NLP effector protein 14 from Phytophthora capsici.